The following is a 65-amino-acid chain: Metallothionein-like protein 3B (65 aa).

This sequence belongs to the metallothionein superfamily. Type 15 family.

Functionally, metallothioneins have a high content of cysteine residues that bind various heavy metals. The polypeptide is Metallothionein-like protein 3B (MT3B) (Oryza sativa subsp. indica (Rice)).